Consider the following 436-residue polypeptide: Probable ABC transporter binding protein NosD (436 aa).

Positions 1–27 (MFKAQATFSRYSAAVSLLLLFSGAAQA) are cleaved as a signal peptide. 8 PbH1 repeats span residues 85-113 (APDV…FILP), 115-136 (AERA…FVDG), 137-166 (TRDV…HLFA), 167-188 (VSGA…YIDT), 189-210 (SNGN…HYMF), 233-255 (SRKL…LMNY), 293-314 (SLFN…HLTA), and 316-354 (SEDN…YWSD).

Belongs to the NosD family. As to quaternary structure, the complex may be composed of an ATP-binding protein (NosF), a transmembrane protein (NosY) and a solute-binding protein (NosD).

Its subcellular location is the periplasm. Functionally, required for the assembly of the copper chromophores of nitrous oxide reductase. Could be part of the ABC transporter complex NosDFY. This Stutzerimonas stutzeri (Pseudomonas stutzeri) protein is Probable ABC transporter binding protein NosD.